The following is a 664-amino-acid chain: DNA mismatch repair protein MutL (664 aa).

Positions arginine 382–glutamine 447 are disordered. Over residues arginine 427–glutamate 436 the composition is skewed to polar residues.

It belongs to the DNA mismatch repair MutL/HexB family.

In terms of biological role, this protein is involved in the repair of mismatches in DNA. It is required for dam-dependent methyl-directed DNA mismatch repair. May act as a 'molecular matchmaker', a protein that promotes the formation of a stable complex between two or more DNA-binding proteins in an ATP-dependent manner without itself being part of a final effector complex. This chain is DNA mismatch repair protein MutL, found in Vibrio vulnificus (strain CMCP6).